We begin with the raw amino-acid sequence, 166 residues long: Lipoprotein signal peptidase (166 aa).

4 helical membrane passes run 9-29 (ASGA…FDQL), 45-65 (ALTS…FGFL), 71-91 (WQRW…CFLL), and 100-120 (FSLS…DRLV). Residues Asp-126 and Asp-144 contribute to the active site. A helical membrane pass occupies residues 135–155 (WHFPAFNLADSAITIGAVLLI).

It belongs to the peptidase A8 family.

The protein localises to the cell inner membrane. The catalysed reaction is Release of signal peptides from bacterial membrane prolipoproteins. Hydrolyzes -Xaa-Yaa-Zaa-|-(S,diacylglyceryl)Cys-, in which Xaa is hydrophobic (preferably Leu), and Yaa (Ala or Ser) and Zaa (Gly or Ala) have small, neutral side chains.. Its pathway is protein modification; lipoprotein biosynthesis (signal peptide cleavage). In terms of biological role, this protein specifically catalyzes the removal of signal peptides from prolipoproteins. The chain is Lipoprotein signal peptidase from Burkholderia multivorans (strain ATCC 17616 / 249).